The sequence spans 289 residues: Serine/threonine-protein phosphatase PGAM5, mitochondrial (289 aa).

Residues 1 to 6 (MAFRQA) lie on the Mitochondrial matrix side of the membrane. Residues 7–29 (LQLAACGLAGGSAAVLFSAVAVG) form a helical membrane-spanning segment. At 30–289 (KPRAGGDAEP…FMPPDKITRS (260 aa)) the chain is on the mitochondrial intermembrane side. The tract at residues 32-59 (RAGGDAEPRPAEPPAWAGGARPGPGVWD) is disordered. Low complexity predominate over residues 45-56 (PAWAGGARPGPG). Residues 77-82 (NVESGE) form an interaction with KEAP1 region. Phosphoserine is present on residues serine 80 and serine 87. Lysine 116, lysine 144, and lysine 191 each carry N6-acetyllysine.

Belongs to the phosphoglycerate mutase family. BPG-dependent PGAM subfamily. Dimer. Forms a ternary complex with NFE2L2 and KEAP1. Interacts with BCL2L1 and MAP3K5. Upon TNF-induced necrosis, forms in complex with RIPK1, RIPK3 and MLKL; the formation of this complex leads to PGAM5 phosphorylation. Isoform 2, but not isoform 1, interacts with DNM1L; this interaction leads to DNM1L dephosphorylation and activation and eventually to mitochondria fragmentation. Both isoform 1 and isoform 2 are phosphorylated by the RIPK1/RIPK3 complex under necrotic conditions. This phosphorylation increases PGAM5 phosphatase activity. In terms of processing, proteolytically cleaved by PARL in response to loss of mitochondrial membrane potential.

It localises to the mitochondrion outer membrane. It is found in the mitochondrion inner membrane. The catalysed reaction is O-phospho-L-seryl-[protein] + H2O = L-seryl-[protein] + phosphate. It carries out the reaction O-phospho-L-threonyl-[protein] + H2O = L-threonyl-[protein] + phosphate. In terms of biological role, mitochondrial serine/threonine phosphatase that dephosphorylates various substrates and thus plays a role in different biological processes including cellular senescence or mitophagy. Modulates cellular senescence by regulating mitochondrial dynamics. Mechanistically, participates in mitochondrial fission through dephosphorylating DNM1L/DRP1. Additionally, dephosphorylates MFN2 in a stress-sensitive manner and consequently protects it from ubiquitination and degradation to promote mitochondrial network formation. Regulates mitophagy independent of PARKIN by interacting with and dephosphorylating FUNDC1, which interacts with LC3. Regulates anti-oxidative response by forming a tertiary complex with KEAP1 and NRF2. Regulates necroptosis by acting as a RIPK3 target and recruiting the RIPK1-RIPK3-MLKL necrosis 'attack' complex to mitochondria. This chain is Serine/threonine-protein phosphatase PGAM5, mitochondrial (PGAM5), found in Homo sapiens (Human).